Consider the following 172-residue polypeptide: Large ribosomal subunit protein uL22y (172 aa).

It belongs to the universal ribosomal protein uL22 family.

The sequence is that of Large ribosomal subunit protein uL22y from Hordeum vulgare (Barley).